Here is a 395-residue protein sequence, read N- to C-terminus: S-adenosylmethionine synthase (395 aa).

Mg(2+) is bound at residue glutamate 10. Histidine 16 lines the ATP pocket. Glutamate 44 is a K(+) binding site. L-methionine-binding residues include glutamate 57 and glutamine 100. ATP contacts are provided by residues 168 to 170 (DGK), 236 to 239 (SGRF), 253 to 254 (RK), alanine 270, lysine 274, and lysine 278. Lysine 278 is a binding site for L-methionine.

The protein belongs to the AdoMet synthase family. In terms of assembly, homotetramer. Mn(2+) serves as cofactor. The cofactor is Mg(2+). Co(2+) is required as a cofactor. Requires K(+) as cofactor.

It is found in the cytoplasm. The catalysed reaction is L-methionine + ATP + H2O = S-adenosyl-L-methionine + phosphate + diphosphate. Its pathway is amino-acid biosynthesis; S-adenosyl-L-methionine biosynthesis; S-adenosyl-L-methionine from L-methionine: step 1/1. Functionally, catalyzes the formation of S-adenosylmethionine from methionine and ATP. The reaction comprises two steps that are both catalyzed by the same enzyme: formation of S-adenosylmethionine (AdoMet) and triphosphate, and subsequent hydrolysis of the triphosphate. This Populus deltoides (Eastern poplar) protein is S-adenosylmethionine synthase (METK).